The sequence spans 579 residues: Probable N-acetylgalactosaminyltransferase 9 (579 aa).

Residues 1 to 12 lie on the Cytoplasmic side of the membrane; sequence MLRYIIPRKKGT. The chain crosses the membrane as a helical; Signal-anchor for type II membrane protein span at residues 13–30; sequence FVIAAFLTVAFFCIVAYH. The Lumenal segment spans residues 31 to 579; that stretch reads RNDRRRTKFQ…KWNFIDPAKA (549 aa). Residue asparagine 67 is glycosylated (N-linked (GlcNAc...) asparagine). Intrachain disulfides connect cysteine 123-cysteine 356, cysteine 347-cysteine 427, cysteine 464-cysteine 483, cysteine 507-cysteine 520, and cysteine 545-cysteine 562. Residues 133-243 are catalytic subdomain A; it reads LPKTSVIIIF…HGWLEPIVQR (111 aa). The substrate site is built by aspartate 174 and arginine 204. Aspartate 227 is a Mn(2+) binding site. Serine 228 is a substrate binding site. Histidine 229 provides a ligand contact to Mn(2+). Positions 302–364 are catalytic subdomain B; that stretch reads YIRSPTMAGG…PCSHVGHIFR (63 aa). Tryptophan 333 contributes to the substrate binding site. Histidine 361 contacts Mn(2+). Arginine 364, histidine 367, and tyrosine 369 together coordinate substrate. Residue asparagine 370 is glycosylated (N-linked (GlcNAc...) asparagine). One can recognise a Ricin B-type lectin domain in the interval 450 to 574; sequence AYGALHTVVS…KDEHQKWNFI (125 aa).

It belongs to the glycosyltransferase 2 family. GalNAc-T subfamily. Requires Mn(2+) as cofactor.

It localises to the golgi apparatus membrane. It functions in the pathway protein modification; protein glycosylation. In terms of biological role, probable glycopeptide transferase involved in O-linked oligosaccharide biosynthesis. Glycopeptide transferases catalyze the transfer of an N-acetyl-D-galactosamine residue to an already glycosylated peptide. In contrast to other members of the family, it does not act as a peptide transferase that transfers GalNAc onto serine or threonine residue on peptides that have been tested. Some peptide transferase activity is however not excluded, considering that its appropriate peptide substrate may remain unidentified. In Caenorhabditis elegans, this protein is Probable N-acetylgalactosaminyltransferase 9 (gly-9).